Consider the following 249-residue polypeptide: Small ribosomal subunit protein eS6 (249 aa).

Lysine 14 participates in a covalent cross-link: Glycyl lysine isopeptide (Lys-Gly) (interchain with G-Cter in SUMO2). Glutamate 35 carries the post-translational modification ADP-ribosyl glutamic acid. Arginine 137 bears the (3R)-3-hydroxyarginine mark. Position 148 is a phosphoserine (serine 148). N6-acetyllysine is present on lysine 211. A compositionally biased stretch (basic and acidic residues) spans 217–229 (MKEAKEKRQEQIA). Positions 217–249 (MKEAKEKRQEQIAKRRRLSSLRASTSKSESSQK) are disordered. Phosphoserine; by RPS6KA1, RPS6KA3, DAPK1 and PASK is present on residues serine 235 and serine 236. A compositionally biased stretch (low complexity) spans 236–249 (SLRASTSKSESSQK). Phosphoserine occurs at positions 240, 242, 244, and 247.

This sequence belongs to the eukaryotic ribosomal protein eS6 family. As to quaternary structure, component of the small ribosomal subunit. Part of the small subunit (SSU) processome, composed of more than 70 proteins and the RNA chaperone small nucleolar RNA (snoRNA) U3. In terms of processing, ribosomal protein S6 is the major substrate of protein kinases in eukaryote ribosomes. The phosphorylation is stimulated by growth factors, tumor promoting agents, and mitogens. It is dephosphorylated at growth arrest. Phosphorylated at Ser-235 and Ser-236 by RPS6KA1 and RPS6KA3; phosphorylation at these sites facilitates the assembly of the pre-initiation complex. Post-translationally, specifically hydroxylated (with R stereochemistry) at C-3 of Arg-137 by KDM8. Mono-ADP-ribosylation at Glu-35 by PARP16 inhibits polysome assembly and mRNA loading, thereby inhibiting protein translation.

Its subcellular location is the cytoplasm. The protein resides in the nucleus. The protein localises to the nucleolus. Component of the 40S small ribosomal subunit. Plays an important role in controlling cell growth and proliferation through the selective translation of particular classes of mRNA. Part of the small subunit (SSU) processome, first precursor of the small eukaryotic ribosomal subunit. During the assembly of the SSU processome in the nucleolus, many ribosome biogenesis factors, an RNA chaperone and ribosomal proteins associate with the nascent pre-rRNA and work in concert to generate RNA folding, modifications, rearrangements and cleavage as well as targeted degradation of pre-ribosomal RNA by the RNA exosome. The chain is Small ribosomal subunit protein eS6 (RPS6) from Bos taurus (Bovine).